The following is an 834-amino-acid chain: Semaphorin-4C (834 aa).

An N-terminal signal peptide occupies residues 1–20 (MAPHWAVWLLAAGLWGLGIG). The Extracellular segment spans residues 21–664 (AEMWWNLVPR…EARAPLENLG (644 aa)). Positions 30–497 (RKTVSSGELV…SRSQLVQLSL (468 aa)) constitute a Sema domain. The tract at residues 46–489 (SQTGIQDFLT…SKKVLFAGSR (444 aa)) is dominant negative effect on myogenic differentiation. A disulfide bridge connects residues cysteine 99 and cysteine 110. N-linked (GlcNAc...) asparagine glycans are attached at residues asparagine 106 and asparagine 121. Intrachain disulfides connect cysteine 128/cysteine 137, cysteine 261/cysteine 370, and cysteine 285/cysteine 330. N-linked (GlcNAc...) asparagine glycans are attached at residues asparagine 310 and asparagine 419. The PSI domain occupies 499–552 (DCTKYRFCVDCVLARDPYCAWNVNTSRCVATTSGRSGSFLVQHVANLDTSKMCN). 2 disulfide bridges follow: cysteine 500-cysteine 517 and cysteine 509-cysteine 526. 2 N-linked (GlcNAc...) asparagine glycosylation sites follow: asparagine 522 and asparagine 565. Residues 557-645 (KKVRSIPKNI…RLAAESYLVA (89 aa)) form the Ig-like C2-type domain. Cysteine 578 and cysteine 628 are joined by a disulfide. A helical membrane pass occupies residues 665-685 (LVWLAVVALGAVCLVLLLLVL). At 686 to 834 (SLRRRLREEL…PDSNPEESSV (149 aa)) the chain is on the cytoplasmic side. Serine 743 is modified (phosphoserine). A disordered region spans residues 749 to 834 (GHARCQPGGG…PDSNPEESSV (86 aa)). The span at 757–773 (GGPPSPPPGIPGQPLPS) shows a compositional bias: pro residues. The PDZ-binding signature appears at 831 to 834 (ESSV).

The protein belongs to the semaphorin family. In terms of assembly, interacts (via the PDZ-binding motif) with GIPC (via the PDZ domain). Interacts with NCDN. Interacts (via the PDZ-binding motif) with DLG4. Interacts with PLXNB2. Predominantly expressed in brain (at protein level).

It is found in the postsynaptic density membrane. Its subcellular location is the cytoplasmic vesicle. It localises to the secretory vesicle. The protein localises to the synaptic vesicle membrane. In terms of biological role, cell surface receptor for PLXNB2 that plays an important role in cell-cell signaling. PLXNB2 binding promotes downstream activation of RHOA and phosphorylation of ERBB2 at 'Tyr-1248'. Required for normal brain development, axon guidance and cell migration. Probable signaling receptor which may play a role in myogenic differentiation through activation of the stress-activated MAPK cascade. This chain is Semaphorin-4C (Sema4c), found in Mus musculus (Mouse).